Reading from the N-terminus, the 604-residue chain is Putative ankyrin repeat protein L56 (604 aa).

13 ANK repeats span residues 77-106 (IDRY…DILV), 135-164 (FFKS…NADG), 166-189 (LSAC…YDDN), 190-219 (TIYH…EDKR), 221-247 (NVFI…KWKI), 248-277 (DVEF…DSKY), 314-341 (KFSK…NENV), 342-371 (DLRE…EFTD), 380-410 (EHIT…SRSY), 445-474 (YSQA…DIKP), 475-504 (ITNI…DITI), 505-534 (NDNR…DIRT), and 535-565 (DDDY…EPSN).

The chain is Putative ankyrin repeat protein L56 from Acanthamoeba polyphaga (Amoeba).